Consider the following 410-residue polypeptide: Elongation factor Tu, chloroplastic (410 aa).

A tr-type G domain is found at 10–215 (KPHVNIGTIG…AVDQYIPTPK (206 aa)). Residues 19-26 (GHVDHGKT) form a G1 region. GTP is bound at residue 19–26 (GHVDHGKT). Thr26 contacts Mg(2+). The G2 stretch occupies residues 61-65 (GITIN). The segment at 82–85 (DCPG) is G3. Residues 82 to 86 (DCPGH) and 137 to 140 (NKQD) contribute to the GTP site. Residues 137-140 (NKQD) form a G4 region. The G5 stretch occupies residues 175-177 (SAL).

The protein belongs to the TRAFAC class translation factor GTPase superfamily. Classic translation factor GTPase family. EF-Tu/EF-1A subfamily.

It is found in the plastid. Its subcellular location is the chloroplast. It catalyses the reaction GTP + H2O = GDP + phosphate + H(+). In terms of biological role, GTP hydrolase that promotes the GTP-dependent binding of aminoacyl-tRNA to the A-site of ribosomes during protein biosynthesis. The chain is Elongation factor Tu, chloroplastic (tufA) from Nephroselmis olivacea (Green alga).